A 210-amino-acid polypeptide reads, in one-letter code: MTLSADLLLHAYANGVFPMAESRDDPEVFWVDPKRRGILPLDGFRISRSLAKRLRRDDYSISVNRDFAGVVQGCADREETWINGEIFDRYQELHHDGFAHSLEVWMDDALVGGVYGVSLGGAFFGESMFSRRRDASKIALAYLVDRLNAGGYILCDTQFITPHLASLGGREISRAAYRRRLAEALDQPGDFISPALPSPQVLLQRRTQTS.

This sequence belongs to the L/F-transferase family.

The protein localises to the cytoplasm. It carries out the reaction N-terminal L-lysyl-[protein] + L-leucyl-tRNA(Leu) = N-terminal L-leucyl-L-lysyl-[protein] + tRNA(Leu) + H(+). The enzyme catalyses N-terminal L-arginyl-[protein] + L-leucyl-tRNA(Leu) = N-terminal L-leucyl-L-arginyl-[protein] + tRNA(Leu) + H(+). The catalysed reaction is L-phenylalanyl-tRNA(Phe) + an N-terminal L-alpha-aminoacyl-[protein] = an N-terminal L-phenylalanyl-L-alpha-aminoacyl-[protein] + tRNA(Phe). Its function is as follows. Functions in the N-end rule pathway of protein degradation where it conjugates Leu, Phe and, less efficiently, Met from aminoacyl-tRNAs to the N-termini of proteins containing an N-terminal arginine or lysine. In Ruegeria sp. (strain TM1040) (Silicibacter sp.), this protein is Leucyl/phenylalanyl-tRNA--protein transferase.